The primary structure comprises 101 residues: MAKKSMIQRELKREKLVAKYAQKRAELKAIILDINSTEEQIWEAQIKLQKLPVNSSASRVQRRCKVTGRPHAVYRKFGLCRNKLREYAMAGDVPGLKKASW.

This sequence belongs to the universal ribosomal protein uS14 family. In terms of assembly, part of the 30S ribosomal subunit. Contacts proteins S3 and S10.

Binds 16S rRNA, required for the assembly of 30S particles and may also be responsible for determining the conformation of the 16S rRNA at the A site. The chain is Small ribosomal subunit protein uS14 from Francisella tularensis subsp. novicida (strain U112).